We begin with the raw amino-acid sequence, 348 residues long: Protein arginine N-methyltransferase 1 (348 aa).

The region spanning 20–322 is the SAM-dependent MTase PRMT-type domain; sequence EQHYFNSYDH…EKNNRDLNIK (303 aa). S-adenosyl-L-methionine-binding residues include His-33, Arg-42, Gly-66, Asp-88, and Glu-117. Catalysis depends on residues Glu-132 and Glu-141.

The protein belongs to the class I-like SAM-binding methyltransferase superfamily. Protein arginine N-methyltransferase family. In terms of assembly, homodimer. The dimers can then associate to form a ring-shaped homohexamer. Interacts with NPL3, BRE5, MTR4, SNF2, SUM1, and SSD1.

It localises to the nucleus. The catalysed reaction is L-arginyl-[protein] + S-adenosyl-L-methionine = N(omega)-methyl-L-arginyl-[protein] + S-adenosyl-L-homocysteine + H(+). It catalyses the reaction L-arginyl-[protein] + 2 S-adenosyl-L-methionine = N(omega),N(omega)-dimethyl-L-arginyl-[protein] + 2 S-adenosyl-L-homocysteine + 2 H(+). Its function is as follows. S-adenosyl-L-methionine-dependent protein-arginine N-methyltransferase that catalyzes both the mono- and asymmetric (type I) dimethylation of the guanidino nitrogens of arginine residues in a variety of RNA-binding proteins such as heterogeneous nuclear ribonucleoproteins (hnRNPs) and small nuclear ribonucleoproteins (snRNPs). Methylates NAB2, NPL3, HRP1 and YRA1, shuttling hnRNPs involved in mRNA processing and export, facilitating their export out of the nucleus. Methylation of NPL3 weakens its interaction with THO2, a component of the TREX (transcription/export) complex important for transcriptional elongation and recruitment of mRNA export factors. Methylates the hnRNP HRB1, but does not influence its subcellular location. Methylates the nucleolar proteins GAR1, NOP1 and NSR1. Methylates the snRNP SNP1 and modulates the cotranscriptional recruitment of splicing factors. Dimethylates free histone H4 (HHF1/HHF2) at 'Arg-4' (H4R3me2a) and plays a role in preservation and establishment of silent chromatin domains. Mono- and dimethylates ribosomal protein S2 (RPS2) at 'Arg-11'. Methylates the catalytic subunit of the SWI/SNF chromatin-remodeling complex SNF2. The chain is Protein arginine N-methyltransferase 1 from Saccharomyces cerevisiae (strain ATCC 204508 / S288c) (Baker's yeast).